A 102-amino-acid chain; its full sequence is MRSIFYFALAFAALTCSNASAALPNPDETRLLSDTFTKRSLRVAGQEAARGEEIVRVTAQSTNKIFKRPAEKDMSKLIAAAKKALLEKKMAKLSKVIKKPAK.

The first 21 residues, 1 to 21, serve as a signal peptide directing secretion; sequence MRSIFYFALAFAALTCSNASA. The RxLR-dEER motif lies at 39–53; sequence RSLRVAGQEAARGEE.

This sequence belongs to the RxLR effector family. In terms of assembly, interacts with host KRBP1.

It is found in the secreted. The protein resides in the host cytoplasm. The protein localises to the host nucleus. It localises to the host nucleolus. In terms of biological role, effector that enhances P.infestans colonization of host plant leaves. During the early stages of P.infestans infection, interacts with and stabilizes host potato K-homology (KH) RNA-binding protein KRBP1, leading to its accumulation. The protein is RxLR effector protein PexRD41 of Phytophthora infestans (strain T30-4) (Potato late blight agent).